Here is a 182-residue protein sequence, read N- to C-terminus: Ribosome-recycling factor (182 aa).

Belongs to the RRF family.

It is found in the cytoplasm. Functionally, responsible for the release of ribosomes from messenger RNA at the termination of protein biosynthesis. May increase the efficiency of translation by recycling ribosomes from one round of translation to another. The protein is Ribosome-recycling factor of Prochlorococcus marinus (strain MIT 9515).